Reading from the N-terminus, the 452-residue chain is Tripartite motif-containing protein 49D (452 aa).

The RING-type zinc-finger motif lies at 15–56 (CPICLNYFIDPVTIDCGHSFCRPCFYLNWQDIPILTQCFECL). Residues 88–129 (SEEQMCGTHRETKKIFCEVDRSLLCLLCSSSLEHRYHRHCPA) form a B box-type zinc finger. Zn(2+) is bound by residues Cys93, His96, Cys115, and His121. In terms of domain architecture, B30.2/SPRY spans 269 to 452 (ELRAGPITGL…LRPIFCCVHL (184 aa)).

It belongs to the TRIM/RBCC family.

The chain is Tripartite motif-containing protein 49D from Homo sapiens (Human).